Here is a 452-residue protein sequence, read N- to C-terminus: Bifunctional protein GlmU (452 aa).

The pyrophosphorylase stretch occupies residues 1–226; the sequence is MNFSAVILAA…PIEVEGVNDR (226 aa). UDP-N-acetyl-alpha-D-glucosamine contacts are provided by residues 8–11, lysine 22, glutamine 73, 78–79, 100–102, glycine 137, glutamate 151, asparagine 166, and asparagine 224; these read LAAG, GT, and YGD. Aspartate 102 contributes to the Mg(2+) binding site. Asparagine 224 provides a ligand contact to Mg(2+). The interval 227 to 247 is linker; that stretch reads AQLARLERAYQAAQAQKLLEQ. The N-acetyltransferase stretch occupies residues 248 to 452; it reads GVMLRDPSRF…IANWQRPTKK (205 aa). UDP-N-acetyl-alpha-D-glucosamine contacts are provided by arginine 330 and lysine 348. The Proton acceptor role is filled by histidine 360. Tyrosine 363 and asparagine 374 together coordinate UDP-N-acetyl-alpha-D-glucosamine. Residues alanine 377, 383-384, serine 402, alanine 420, and arginine 437 each bind acetyl-CoA; that span reads NY.

It in the N-terminal section; belongs to the N-acetylglucosamine-1-phosphate uridyltransferase family. The protein in the C-terminal section; belongs to the transferase hexapeptide repeat family. In terms of assembly, homotrimer. It depends on Mg(2+) as a cofactor.

It localises to the cytoplasm. It carries out the reaction alpha-D-glucosamine 1-phosphate + acetyl-CoA = N-acetyl-alpha-D-glucosamine 1-phosphate + CoA + H(+). It catalyses the reaction N-acetyl-alpha-D-glucosamine 1-phosphate + UTP + H(+) = UDP-N-acetyl-alpha-D-glucosamine + diphosphate. The protein operates within nucleotide-sugar biosynthesis; UDP-N-acetyl-alpha-D-glucosamine biosynthesis; N-acetyl-alpha-D-glucosamine 1-phosphate from alpha-D-glucosamine 6-phosphate (route II): step 2/2. It functions in the pathway nucleotide-sugar biosynthesis; UDP-N-acetyl-alpha-D-glucosamine biosynthesis; UDP-N-acetyl-alpha-D-glucosamine from N-acetyl-alpha-D-glucosamine 1-phosphate: step 1/1. Its pathway is bacterial outer membrane biogenesis; LPS lipid A biosynthesis. Functionally, catalyzes the last two sequential reactions in the de novo biosynthetic pathway for UDP-N-acetylglucosamine (UDP-GlcNAc). The C-terminal domain catalyzes the transfer of acetyl group from acetyl coenzyme A to glucosamine-1-phosphate (GlcN-1-P) to produce N-acetylglucosamine-1-phosphate (GlcNAc-1-P), which is converted into UDP-GlcNAc by the transfer of uridine 5-monophosphate (from uridine 5-triphosphate), a reaction catalyzed by the N-terminal domain. In Aliivibrio fischeri (strain ATCC 700601 / ES114) (Vibrio fischeri), this protein is Bifunctional protein GlmU.